A 249-amino-acid chain; its full sequence is MAGHSQFANIKHRKGAQDAKRAQKFTKLIREIIVATKQGLPDPEFNSRLRSAIITAKKENLPKDRIDAAIKTASGNNQHDNFEEVVYEGYGPGNIALIIQTLTNNRNRTAAELRHALSKYNGKLGESGSVSFLFNHVGLIAYKASSINSFDTLFNTAIELQALDVEENDYDEEKMYYVTCNIQDFGNVRDQLFKKFSDAEFSRLFWKPINITTIDDEELQKRILNLMDVLENNDDVQHVDSNFIFNTKI.

The interval 1–21 is disordered; it reads MAGHSQFANIKHRKGAQDAKR.

It belongs to the TACO1 family.

The protein resides in the cytoplasm. The sequence is that of Probable transcriptional regulatory protein ERGA_CDS_03720 from Ehrlichia ruminantium (strain Gardel).